Reading from the N-terminus, the 662-residue chain is Glycogen debranching enzyme (662 aa).

The active-site Nucleophile is the Asp338. The active-site Proton donor is Glu373.

It belongs to the glycosyl hydrolase 13 family.

It carries out the reaction Hydrolysis of (1-&gt;6)-alpha-D-glucosidic linkages to branches with degrees of polymerization of three or four glucose residues in limit dextrin.. It functions in the pathway glycan degradation; glycogen degradation. Its function is as follows. Removes maltotriose and maltotetraose chains that are attached by 1,6-alpha-linkage to the limit dextrin main chain, generating a debranched limit dextrin. The sequence is that of Glycogen debranching enzyme from Yersinia pseudotuberculosis serotype O:1b (strain IP 31758).